A 224-amino-acid chain; its full sequence is ATP synthase subunit b (224 aa).

Residues 2–22 (TPSLGLIFWQSVIFLISFIIL) form a helical membrane-spanning segment.

The protein belongs to the ATPase B chain family. F-type ATPases have 2 components, F(1) - the catalytic core - and F(0) - the membrane proton channel. F(1) has five subunits: alpha(3), beta(3), gamma(1), delta(1), epsilon(1). F(0) has three main subunits: a(1), b(2) and c(10-14). The alpha and beta chains form an alternating ring which encloses part of the gamma chain. F(1) is attached to F(0) by a central stalk formed by the gamma and epsilon chains, while a peripheral stalk is formed by the delta and b chains.

The protein localises to the cell membrane. In terms of biological role, f(1)F(0) ATP synthase produces ATP from ADP in the presence of a proton or sodium gradient. F-type ATPases consist of two structural domains, F(1) containing the extramembraneous catalytic core and F(0) containing the membrane proton channel, linked together by a central stalk and a peripheral stalk. During catalysis, ATP synthesis in the catalytic domain of F(1) is coupled via a rotary mechanism of the central stalk subunits to proton translocation. Functionally, component of the F(0) channel, it forms part of the peripheral stalk, linking F(1) to F(0). The polypeptide is ATP synthase subunit b (Karelsulcia muelleri (strain GWSS) (Sulcia muelleri)).